The sequence spans 318 residues: tRNA dimethylallyltransferase (318 aa).

Residue 13–20 coordinates ATP; the sequence is GPTAVGKT. Residue 15-20 participates in substrate binding; that stretch reads TAVGKT. An interaction with substrate tRNA region spans residues 38–41; that stretch reads DSMQ.

It belongs to the IPP transferase family. In terms of assembly, monomer. The cofactor is Mg(2+).

The catalysed reaction is adenosine(37) in tRNA + dimethylallyl diphosphate = N(6)-dimethylallyladenosine(37) in tRNA + diphosphate. In terms of biological role, catalyzes the transfer of a dimethylallyl group onto the adenine at position 37 in tRNAs that read codons beginning with uridine, leading to the formation of N6-(dimethylallyl)adenosine (i(6)A). The polypeptide is tRNA dimethylallyltransferase (Bacillus pumilus (strain SAFR-032)).